Here is a 57-residue protein sequence, read N- to C-terminus: Sec-independent protein translocase protein TatA (57 aa).

A helical membrane pass occupies residues 1 to 21; that stretch reads MGISVWQLLIILLIVVMLFGT. The tract at residues 37 to 57 is disordered; the sequence is GFRKSVSDGETTTQAEASSRS. Over residues 44-57 the composition is skewed to polar residues; that stretch reads DGETTTQAEASSRS.

The protein belongs to the TatA/E family. As to quaternary structure, the Tat system comprises two distinct complexes: a TatABC complex, containing multiple copies of TatA, TatB and TatC subunits, and a separate TatA complex, containing only TatA subunits. Substrates initially bind to the TatABC complex, which probably triggers association of the separate TatA complex to form the active translocon.

It localises to the cell inner membrane. Part of the twin-arginine translocation (Tat) system that transports large folded proteins containing a characteristic twin-arginine motif in their signal peptide across membranes. TatA could form the protein-conducting channel of the Tat system. The sequence is that of Sec-independent protein translocase protein TatA from Stutzerimonas stutzeri (Pseudomonas stutzeri).